Here is a 372-residue protein sequence, read N- to C-terminus: Queuine tRNA-ribosyltransferase (372 aa).

Aspartate 92 (proton acceptor) is an active-site residue. Substrate is bound by residues 92 to 96 (DSGGY), aspartate 146, glutamine 188, and glycine 215. Residues 246–252 (GIGSLKE) are RNA binding. Residue aspartate 265 is the Nucleophile of the active site. The interval 270–274 (TRLGR) is RNA binding; important for wobble base 34 recognition. Zn(2+) contacts are provided by cysteine 303, cysteine 305, cysteine 308, and histidine 334.

This sequence belongs to the queuine tRNA-ribosyltransferase family. As to quaternary structure, homodimer. Within each dimer, one monomer is responsible for RNA recognition and catalysis, while the other monomer binds to the replacement base PreQ1. Zn(2+) is required as a cofactor.

It carries out the reaction 7-aminomethyl-7-carbaguanine + guanosine(34) in tRNA = 7-aminomethyl-7-carbaguanosine(34) in tRNA + guanine. It participates in tRNA modification; tRNA-queuosine biosynthesis. In terms of biological role, catalyzes the base-exchange of a guanine (G) residue with the queuine precursor 7-aminomethyl-7-deazaguanine (PreQ1) at position 34 (anticodon wobble position) in tRNAs with GU(N) anticodons (tRNA-Asp, -Asn, -His and -Tyr). Catalysis occurs through a double-displacement mechanism. The nucleophile active site attacks the C1' of nucleotide 34 to detach the guanine base from the RNA, forming a covalent enzyme-RNA intermediate. The proton acceptor active site deprotonates the incoming PreQ1, allowing a nucleophilic attack on the C1' of the ribose to form the product. After dissociation, two additional enzymatic reactions on the tRNA convert PreQ1 to queuine (Q), resulting in the hypermodified nucleoside queuosine (7-(((4,5-cis-dihydroxy-2-cyclopenten-1-yl)amino)methyl)-7-deazaguanosine). This is Queuine tRNA-ribosyltransferase from Prochlorococcus marinus (strain AS9601).